The primary structure comprises 246 residues: 2-C-methyl-D-erythritol 4-phosphate cytidylyltransferase (246 aa).

Belongs to the IspD/TarI cytidylyltransferase family. IspD subfamily.

It catalyses the reaction 2-C-methyl-D-erythritol 4-phosphate + CTP + H(+) = 4-CDP-2-C-methyl-D-erythritol + diphosphate. The protein operates within isoprenoid biosynthesis; isopentenyl diphosphate biosynthesis via DXP pathway; isopentenyl diphosphate from 1-deoxy-D-xylulose 5-phosphate: step 2/6. In terms of biological role, catalyzes the formation of 4-diphosphocytidyl-2-C-methyl-D-erythritol from CTP and 2-C-methyl-D-erythritol 4-phosphate (MEP). This chain is 2-C-methyl-D-erythritol 4-phosphate cytidylyltransferase, found in Chlorobaculum parvum (strain DSM 263 / NCIMB 8327) (Chlorobium vibrioforme subsp. thiosulfatophilum).